A 69-amino-acid chain; its full sequence is Neuropeptide-like protein 30 (69 aa).

An N-terminal signal peptide occupies residues 1 to 22 (MISTSSILILVVLLACFMAASA). A tyrosine amide mark is found at tyrosine 29, tyrosine 39, tyrosine 46, and tyrosine 53. 2 positions are modified to tryptophan amide: tryptophan 58 and tryptophan 67.

The protein belongs to the YARP (YGGW-amide related peptide) family. As to expression, expressed in hypoderm.

The protein localises to the secreted. May have antimicrobial activity. May play a role in response to fungal infection. In Caenorhabditis elegans, this protein is Neuropeptide-like protein 30 (nlp-30).